The sequence spans 148 residues: Large ribosomal subunit protein bL9 (148 aa).

The protein belongs to the bacterial ribosomal protein bL9 family.

Its function is as follows. Binds to the 23S rRNA. The chain is Large ribosomal subunit protein bL9 from Thermus thermophilus.